Consider the following 947-residue polypeptide: Probable outer membrane protein pmp19 (947 aa).

The signal sequence occupies residues 1-19; it reads MKQMRLWGFLFLSSFCQVS. An Autotransporter domain is found at 672–947; that stretch reads IPLQHLCVFG…NAHAGLSLSF (276 aa).

The protein belongs to the PMP outer membrane protein family.

Its subcellular location is the secreted. The protein localises to the cell wall. It is found in the cell outer membrane. This chain is Probable outer membrane protein pmp19 (pmp19), found in Chlamydia pneumoniae (Chlamydophila pneumoniae).